Here is a 362-residue protein sequence, read N- to C-terminus: Dihydroorotate dehydrogenase (quinone) (362 aa).

Residues 62-66 (AGYDK) and Thr86 each bind FMN. Lys66 serves as a coordination point for substrate. Residue 111–115 (NRLGF) coordinates substrate. Asn139 and Asn170 together coordinate FMN. Asn170 serves as a coordination point for substrate. Catalysis depends on Ser173, which acts as the Nucleophile. Substrate is bound at residue Asn175. Residues Lys215 and Ser243 each coordinate FMN. Residue 244–245 (NT) coordinates substrate. Residues Gly266, Gly295, and 316–317 (YS) contribute to the FMN site.

Belongs to the dihydroorotate dehydrogenase family. Type 2 subfamily. As to quaternary structure, monomer. FMN serves as cofactor.

The protein resides in the cell membrane. It catalyses the reaction (S)-dihydroorotate + a quinone = orotate + a quinol. Its pathway is pyrimidine metabolism; UMP biosynthesis via de novo pathway; orotate from (S)-dihydroorotate (quinone route): step 1/1. Its function is as follows. Catalyzes the conversion of dihydroorotate to orotate with quinone as electron acceptor. This chain is Dihydroorotate dehydrogenase (quinone), found in Rhizobium etli (strain ATCC 51251 / DSM 11541 / JCM 21823 / NBRC 15573 / CFN 42).